The primary structure comprises 1380 residues: MSLKEGAHTKWGVLKQKLGPQDPEQIEGNMENADPELCIRLLQIPSVVNYSGLKKRLESSDDDWMVQFLELSGLDLLLEALDRLSGRGVARIADALLQLTCINCVRTLMNSHRGIEYIVNNEGYVRKLSQALDTSNVMVKKQVFELLAALCIYSPEGHALSLDALEHYKAVKNQQYRFSVIMNELSTSDNVPYMVTLLSAINAIIFGTEELRKRVQLRNEFIGLQLLDLLTKLRDLEDEDLLIQAIVFEEAKSEDEEELLKIYGGIDMNNHQEVFSTLFNKVSCSPLSVQLLSVLQGLLHLDQSHPSSPLLWEALDILVNRAVLLADDCQNNNVEEVMDRLVTSKKHPSKEKRKPDKCTNQVNKSIQTDKPKDESCEEKTVKKDPVSSGIPADSLQLSDALLALPACVSPLHTPLSGDITSPSHFPSPPSPVVSNAIDRISTSSSLPPPLPPPLPGTELSLPPPPPPPLPGMGGISLTPPPPPPLPGMGGMLPPPPPPLPGMGGMLPPPPPPLPGMGGMLPPPPPPLPGMGGMLPPPPPPLPGMGGMPPPPPPLPGMGGMPPPPPPMFGMGTFTDEVVVARVDYSLGYLPKAYFKVNKPTLKMKKLNWQKLPPNVINDTHSMWASASSSNDTPEPNYSSIEQLFCLPQAVAKEPAAPVKKPPKEISFLDSKKNLNLNIFLKQFKCPNEEVIQLIEKGDRSRFDIEILKQFLKLLPEKHEVENLKSYQEDKAKLSNADQFYLLLLGIPCYQLRIECMLICEEVNLMTDVLRPKAKVVSSACDDIISSHRLPLFCQLILKVGNFLNYGSHTGNANGFKIGTLLKLTETKANQNRITLLHHILEEIEQNHTDLLQLPSDLENVSTAAGINIENMYSETSGNLKKLRDLQNKISTAATDVKDQYEKSIQECMDALKEVEEQLTDITQKKVKLADYLCEDSAKLSLEETFSTMKAFRDLFLKAKKDNKDRKEQAVKAEKRKKQLADEEAKRQKGENGKIIRKGAAKLEEGCIIDALLADIKKGFQLRKTAKTKTEADSCPKPVSSETTGTDGTDVKHVDHVGILPQIKLDSSLNLDGTEQHKSKSKDNCGENFDNKPVVIAPINLDTSACLMNISEQNAKLPVSALQEGANLKQNPDTFVKEQSAIVTTESSTHNNIDGSSVDKCTLGQSQWPSEISDEVDSKYHEMPMQVEHKERAVEGKCSLPKPSVLGTESSSNQNNALNEGSQQHHNNTANESLQQAQNSALSEASQQSCCHTGIKGSPQFQSSALNADSQPSHTSVVGSAQAQRNELDDVALQTRDTTVTEGSQVEEDKCNDEGYPEHKTMGEHPLNSSSHSTTLQQSSEDGQKVKRGSSKHKKKRRSSKHGEEDGVDSPTHKTRGCVVQ.

The GBD/FH3 domain maps to 1-330; it reads MSLKEGAHTK…RAVLLADDCQ (330 aa). Disordered stretches follow at residues 341-391 and 440-541; these read LVTS…SGIP and ISTS…PPPL. A compositionally biased stretch (basic residues) spans 343–352; sequence TSKKHPSKEK. Residues 367–385 are compositionally biased toward basic and acidic residues; that stretch reads QTDKPKDESCEEKTVKKDP. One can recognise an FH1 domain in the interval 432–592; the sequence is VVSNAIDRIS…DYSLGYLPKA (161 aa). Composition is skewed to pro residues over residues 446–470 and 478–541; these read LPPPLPPPLPGTELSLPPPPPPPLP and TPPP…PPPL. The FH2 domain maps to 593 to 981; it reads YFKVNKPTLK…AEKRKKQLAD (389 aa). Coiled coils occupy residues 879-930 and 956-991; these read LKKL…KLAD and LKAKKDNKDRKEQAVKAEKRKKQLADEEAKRQKGEN. The 16-residue stretch at 1009–1024 folds into the WH2 domain; that stretch reads DALLADIKKGFQLRKT. Disordered regions lie at residues 1026-1049, 1188-1244, and 1260-1380; these read KTKTEADSCPKPVSSETTGTDGTD, HKER…LSEA, and FQSS…CVVQ. Composition is skewed to polar residues over residues 1206–1244, 1260–1284, and 1294–1303; these read GTESSSNQNNALNEGSQQHHNNTANESLQQAQNSALSEA, FQSSALNADSQPSHTSVVGSAQAQR, and TRDTTVTEGS. A compositionally biased stretch (basic and acidic residues) spans 1306–1322; sequence EEDKCNDEGYPEHKTMG. The span at 1328 to 1339 shows a compositional bias: low complexity; the sequence is SSSHSTTLQQSS. Residues 1345–1359 show a composition bias toward basic residues; the sequence is VKRGSSKHKKKRRSS.

The protein belongs to the formin homology family.

The sequence is that of Inverted formin-2 (inf2) from Xenopus tropicalis (Western clawed frog).